The chain runs to 128 residues: Aspartate 1-decarboxylase (128 aa).

The Schiff-base intermediate with substrate; via pyruvic acid role is filled by Ser-25. Ser-25 carries the post-translational modification Pyruvic acid (Ser). A substrate-binding site is contributed by Thr-57. Tyr-58 serves as the catalytic Proton donor. Position 73-75 (73-75 (GSA)) interacts with substrate.

Belongs to the PanD family. In terms of assembly, heterooctamer of four alpha and four beta subunits. The cofactor is pyruvate. Is synthesized initially as an inactive proenzyme, which is activated by self-cleavage at a specific serine bond to produce a beta-subunit with a hydroxyl group at its C-terminus and an alpha-subunit with a pyruvoyl group at its N-terminus.

It is found in the cytoplasm. It catalyses the reaction L-aspartate + H(+) = beta-alanine + CO2. It functions in the pathway cofactor biosynthesis; (R)-pantothenate biosynthesis; beta-alanine from L-aspartate: step 1/1. Functionally, catalyzes the pyruvoyl-dependent decarboxylation of aspartate to produce beta-alanine. The protein is Aspartate 1-decarboxylase of Burkholderia ambifaria (strain ATCC BAA-244 / DSM 16087 / CCUG 44356 / LMG 19182 / AMMD) (Burkholderia cepacia (strain AMMD)).